The chain runs to 89 residues: Snake venom serine protease rhinocerase (89 aa).

A Peptidase S1 domain is found at V1–K89. D45 functions as the Charge relay system in the catalytic mechanism. C64 and C69 are joined by a disulfide.

The protein belongs to the peptidase S1 family. Snake venom subfamily. Glycosylated. As to expression, expressed by the venom gland.

It localises to the secreted. With respect to regulation, inhibited by PMSF. Not inhibited by benzamidine. Snake venom serine protease that cleaves fibrinogen alpha and beta chains (FGA and FGB), but not gamma chains. Exhibits fibrinolytic and kininogenolytic. Preferentially cleaves after Arg and Lys residues. The chain is Snake venom serine protease rhinocerase from Bitis rhinoceros (West African gaboon viper).